Here is a 346-residue protein sequence, read N- to C-terminus: Phosphoribosylformylglycinamidine cyclo-ligase (346 aa).

The protein belongs to the AIR synthase family.

The protein resides in the cytoplasm. The catalysed reaction is 2-formamido-N(1)-(5-O-phospho-beta-D-ribosyl)acetamidine + ATP = 5-amino-1-(5-phospho-beta-D-ribosyl)imidazole + ADP + phosphate + H(+). It functions in the pathway purine metabolism; IMP biosynthesis via de novo pathway; 5-amino-1-(5-phospho-D-ribosyl)imidazole from N(2)-formyl-N(1)-(5-phospho-D-ribosyl)glycinamide: step 2/2. This Prochlorococcus marinus (strain NATL2A) protein is Phosphoribosylformylglycinamidine cyclo-ligase.